A 206-amino-acid polypeptide reads, in one-letter code: 2,3-bisphosphoglycerate-dependent phosphoglycerate mutase (206 aa).

Residues 9-16 (RHGQSEWN), 22-23 (TG), R61, 88-91 (ERDY), K99, 115-116 (RR), and 159-160 (GN) each bind substrate. H10 (tele-phosphohistidine intermediate) is an active-site residue. E88 serves as the catalytic Proton donor/acceptor.

Belongs to the phosphoglycerate mutase family. BPG-dependent PGAM subfamily. In terms of assembly, homodimer.

The enzyme catalyses (2R)-2-phosphoglycerate = (2R)-3-phosphoglycerate. The protein operates within carbohydrate degradation; glycolysis; pyruvate from D-glyceraldehyde 3-phosphate: step 3/5. In terms of biological role, catalyzes the interconversion of 2-phosphoglycerate and 3-phosphoglycerate. This chain is 2,3-bisphosphoglycerate-dependent phosphoglycerate mutase, found in Bartonella quintana (strain Toulouse) (Rochalimaea quintana).